The sequence spans 93 residues: C-C motif chemokine 17 (93 aa).

Positions 1 to 23 are cleaved as a signal peptide; the sequence is MMSLQMLLLAALLLGTSLQHASA. Disulfide bonds link Cys-33–Cys-57 and Cys-34–Cys-73.

This sequence belongs to the intercrine beta (chemokine CC) family.

It is found in the secreted. Its function is as follows. Chemokine, which displays chemotactic activity for T lymphocytes, preferentially Th2 cells, but not monocytes or granulocytes. Therefore plays an important role in a wide range of inflammatory and immunological processes. Acts by binding to CCR4 at T-cell surface. Mediates GM-CSF/CSF2-driven pain and inflammation. In the brain, required to maintain the typical, highly branched morphology of hippocampal microglia under homeostatic conditions. May be important for the appropriate adaptation of microglial morphology and synaptic plasticity to acute lipopolysaccharide (LPS)-induced neuroinflammation. Plays a role in wound healing, mainly by inducing fibroblast migration into the wound. The chain is C-C motif chemokine 17 (Ccl17) from Rattus norvegicus (Rat).